We begin with the raw amino-acid sequence, 224 residues long: Metalloproteinase inhibitor 4 (224 aa).

Residues 1–29 form the signal peptide; sequence MPQSPRPVPSWALLLRLLALLRPPGLGEA. Cys-30 provides a ligand contact to Zn(2+). Involved in metalloproteinase-binding stretches follow at residues 30–33 and 99–100; these read CSCA and SS. 6 cysteine pairs are disulfide-bonded: Cys-30-Cys-102, Cys-32-Cys-131, Cys-42-Cys-156, Cys-158-Cys-205, Cys-163-Cys-168, and Cys-176-Cys-197. Residues 30-156 form the NTR domain; the sequence is CSCAPAHPQQ…SLNHHYHLNC (127 aa).

Belongs to the protease inhibitor I35 (TIMP) family.

It localises to the secreted. Its function is as follows. Complexes with metalloproteinases (such as collagenases) and irreversibly inactivates them by binding to their catalytic zinc cofactor. In Bos taurus (Bovine), this protein is Metalloproteinase inhibitor 4 (TIMP4).